Reading from the N-terminus, the 314-residue chain is E3 ubiquitin-protein ligase SINA-like 11 (314 aa).

A compositionally biased stretch (polar residues) spans 1-12 (MEDSNSHPQNQT). Residues 1 to 31 (MEDSNSHPQNQTSKRKSSHPQKKQRMENETR) form a disordered region. The segment covering 13 to 23 (SKRKSSHPQKK) has biased composition (basic residues). The RING-type; degenerate zinc finger occupies 43 to 81 (CPVCFEPLTIPTFQCDDGHIVCNFCFAKVSNKCPGPGCD). Positions 95–280 (VLESAFVPCQ…PANEVQQVTI (186 aa)) are SBD. The segment at 98–156 (SAFVPCQNTEFGCTKSVSYEKVSSHEKECNYSQCSCPNLECNYTGSYNIIYGHFMRRHL) adopts an SIAH-type zinc-finger fold. Residues Cys-103, Cys-110, His-122, Cys-126, Cys-133, Cys-138, His-150, and His-155 each contribute to the Zn(2+) site.

This sequence belongs to the SINA (Seven in absentia) family.

It catalyses the reaction S-ubiquitinyl-[E2 ubiquitin-conjugating enzyme]-L-cysteine + [acceptor protein]-L-lysine = [E2 ubiquitin-conjugating enzyme]-L-cysteine + N(6)-ubiquitinyl-[acceptor protein]-L-lysine.. It functions in the pathway protein modification; protein ubiquitination. Functionally, E3 ubiquitin-protein ligase that mediates ubiquitination and subsequent proteasomal degradation of target proteins. E3 ubiquitin ligases accept ubiquitin from an E2 ubiquitin-conjugating enzyme in the form of a thioester and then directly transfers the ubiquitin to targeted substrates. It probably triggers the ubiquitin-mediated degradation of different substrates. The polypeptide is E3 ubiquitin-protein ligase SINA-like 11 (Arabidopsis thaliana (Mouse-ear cress)).